Reading from the N-terminus, the 201-residue chain is Molybdenum cofactor guanylyltransferase (201 aa).

Residues 14–16 (LAG), lysine 31, and aspartate 104 contribute to the GTP site. Aspartate 104 provides a ligand contact to Mg(2+).

Belongs to the MobA family. Monomer. The cofactor is Mg(2+).

The protein resides in the cytoplasm. It carries out the reaction Mo-molybdopterin + GTP + H(+) = Mo-molybdopterin guanine dinucleotide + diphosphate. Transfers a GMP moiety from GTP to Mo-molybdopterin (Mo-MPT) cofactor (Moco or molybdenum cofactor) to form Mo-molybdopterin guanine dinucleotide (Mo-MGD) cofactor. The chain is Molybdenum cofactor guanylyltransferase from Helicobacter pylori (strain G27).